Here is a 1163-residue protein sequence, read N- to C-terminus: Zinc finger protein 516 (1163 aa).

Positions 1–13 are enriched in basic and acidic residues; the sequence is MDRNREAEMELRR. The disordered stretch occupies residues 1–26; it reads MDRNREAEMELRRGPSPTRAGRGHEV. Residues 1–431 form a mediates promoter DNA-binding and activation of transcription region; sequence MDRNREAEME…ATRGKVAEPA (431 aa). 7 C2H2-type zinc fingers span residues 34–56, 62–84, 174–197, 200–223, 248–270, 276–298, and 335–357; these read HTCC…MRKH, YKCP…IRSH, VQCS…HQAH, FKCR…ERDH, FPCE…MKKH, HGCH…MKAH, and EVCA…NAIH. The span at 460-469 shows a compositional bias: basic and acidic residues; the sequence is SQEKRKREQD. Disordered stretches follow at residues 460–512, 533–667, and 679–730; these read SQEK…TGQG, HSRV…QEQH, and HPKQ…APDL. Residues 496-507 show a composition bias toward low complexity; that stretch reads RSAARPNRRAAA. A C2H2-type 8 zinc finger spans residues 515–537; sequence SECFECGKIFRTYHQMVLHSRVH. Residues 542-552 are compositionally biased toward basic and acidic residues; sequence RERDSDGDRAA. Residues 561–572 show a composition bias toward polar residues; it reads EGDSASQPSSPG. Residues 588 to 598 are compositionally biased toward acidic residues; sequence EAAEDSGEEGA. Residues 615-625 show a composition bias toward polar residues; the sequence is EVTSTELSSGD. The segment covering 626–641 has biased composition (basic and acidic residues); sequence QSHKMGDNASERDTGE. Residue Lys-643 forms a Glycyl lysine isopeptide (Lys-Gly) (interchain with G-Cter in SUMO2) linkage. A compositionally biased stretch (basic and acidic residues) spans 656–667; the sequence is SSRETSRRQEQH. Lys-681 is covalently cross-linked (Glycyl lysine isopeptide (Lys-Gly) (interchain with G-Cter in SUMO2)). The span at 706–720 shows a compositional bias: basic and acidic residues; the sequence is PAEKLSDLHNKEHSG. A C2H2-type 9; atypical zinc finger spans residues 760-783; the sequence is HPCPYCSHKTYYPEVLWMHKRIWH. A disordered region spans residues 838–1007; sequence TQVPGGMPGS…PPREPPSKAA (170 aa). A compositionally biased stretch (low complexity) spans 840-857; it reads VPGGMPGSKSGSSPLGVV. Residues Lys-1043 and Lys-1062 each participate in a glycyl lysine isopeptide (Lys-Gly) (interchain with G-Cter in SUMO2) cross-link. The segment at 1098–1120 adopts a C2H2-type 10 zinc-finger fold; sequence FVCIECGKSFHQPGHLRAHMRAH. The interval 1126-1163 is disordered; the sequence is SDGPRGSEVHTTSADAPKQGRDHSNTGTVQTVPLRKGT.

Belongs to the krueppel C2H2-type zinc-finger protein family. Interacts with PRDM16; the interaction is direct and may play a role in the transcription of brown adipose tissue-specific genes. Interacts with PWWP2B. Interacts with HDAC1; this interaction is enhanced in the presence of PWWP2B.

It is found in the nucleus. Functionally, transcriptional regulator that binds to the promoter and activates the transcription of genes promoting brown adipose tissue (BAT) differentiation. Among brown adipose tissue-specific genes, binds the proximal region of the promoter of the UCP1 gene to activate its transcription and thereby regulate thermogenesis. May also play a role in the cellular response to replication stress. In Homo sapiens (Human), this protein is Zinc finger protein 516.